The sequence spans 138 residues: Cysteine desulfuration protein SufE (138 aa).

The active-site Cysteine persulfide intermediate is the Cys51.

The protein belongs to the SufE family. As to quaternary structure, homodimer. Interacts with SufS.

The protein resides in the cytoplasm. Its pathway is cofactor biosynthesis; iron-sulfur cluster biosynthesis. Its function is as follows. Participates in cysteine desulfuration mediated by SufS. Cysteine desulfuration mobilizes sulfur from L-cysteine to yield L-alanine and constitutes an essential step in sulfur metabolism for biosynthesis of a variety of sulfur-containing biomolecules. Functions as a sulfur acceptor for SufS, by mediating the direct transfer of the sulfur atom from the S-sulfanylcysteine of SufS, an intermediate product of cysteine desulfuration process. The chain is Cysteine desulfuration protein SufE from Salmonella dublin (strain CT_02021853).